Consider the following 539-residue polypeptide: Carboxypeptidase Y homolog A (539 aa).

The signal sequence occupies residues 1-17 (MKALTATLLVGTALAAV). Residues 18–122 (PPQQPIQVPT…KLEKYDLRVK (105 aa)) constitute a propeptide that is removed on maturation. Disulfide bonds link cysteine 176–cysteine 416, cysteine 310–cysteine 324, cysteine 334–cysteine 357, cysteine 341–cysteine 350, and cysteine 379–cysteine 386. Residue asparagine 207 is glycosylated (N-linked (GlcNAc...) asparagine). Serine 263 is a catalytic residue. Aspartate 455 is a catalytic residue. Asparagine 506 carries an N-linked (GlcNAc...) asparagine glycan. Histidine 517 is a catalytic residue.

It belongs to the peptidase S10 family.

Its subcellular location is the vacuole. It carries out the reaction Release of a C-terminal amino acid with broad specificity.. Its function is as follows. Vacuolar carboxypeptidase involved in degradation of small peptides. Digests preferentially peptides containing an aliphatic or hydrophobic residue in P1' position, as well as methionine, leucine or phenylalanine in P1 position of ester substrate. This Coccidioides posadasii (strain C735) (Valley fever fungus) protein is Carboxypeptidase Y homolog A (cpyA).